We begin with the raw amino-acid sequence, 341 residues long: UDP-glucose 4-epimerase (341 aa).

This sequence belongs to the polysaccharide synthase family.

The enzyme catalyses UDP-alpha-D-glucose = UDP-alpha-D-galactose. Its function is as follows. Epimerizes UDP-galactose to UDP-glucose. The protein is UDP-glucose 4-epimerase (capD) of Rickettsia typhi (strain ATCC VR-144 / Wilmington).